Consider the following 228-residue polypeptide: Glucose-induced degradation protein 8-A homolog (228 aa).

The LisH domain occupies 25–57 (QRADMNRLIMNYLVTEGFKEAAEKFRMESGIEP). The 58-residue stretch at 63-120 (SLDERIKIREMVLKGQIQEAIALINSLHPELLDTNRYLYFHLQQQHLIELIRLRETEA) folds into the CTLH domain.

Belongs to the GID8 family. In terms of assembly, identified in the CTLH complex that contains at least MAEA, RMND5A (or alternatively its paralog RMND5B), GID8, WDR26, and RANBP9 and/or RANBP10. Interacts with CTNNB1.

In terms of biological role, core component of the CTLH E3 ubiquitin-protein ligase complex that selectively accepts ubiquitin from UBE2H and mediates ubiquitination and subsequent proteasomal degradation of target proteins. Acts as a positive regulator of Wnt signaling pathway by promoting beta-catenin (CTNNB1) nuclear accumulation. Required for normal Wnt signaling and normal dorsoventral patterning during embryogenesis. The polypeptide is Glucose-induced degradation protein 8-A homolog (gid8a) (Danio rerio (Zebrafish)).